The chain runs to 2410 residues: Genome polyprotein 1 (2410 aa).

Residues 1–22 (MEQTLAQAVSRKSKTDTPMAEE) form a disordered region. The Helicase ATP-binding domain occupies 474-632 (KMADANNCWS…AARKYPLHVE (159 aa)). Position 487–494 (487–494 (GHTGSGKS)) interacts with ATP. In terms of domain architecture, Helicase C-terminal spans 647–813 (GGGDLLDISK…NVPFYMNETF (167 aa)). The residue at position 1234 (Tyr-1234) is an O-(5'-phospho-RNA)-tyrosine. Residues 1359–1573 (ITLEASTGIL…CGYASHTALF (215 aa)) enclose the Peptidase C4 domain. Residues His-1404, Asp-1440, and Cys-1507 each act as for nuclear inclusion protein A activity in the active site. A RdRp catalytic domain is found at 1857–1980 (WLHGSGDGSR…AISPQFDEEF (124 aa)). Residues 2173–2200 (TRTPTEDDGKLKTPSGARIPSSAADGNW) are disordered.

This sequence belongs to the bymoviruses polyprotein 1 family. Post-translationally, VPg is uridylylated by the polymerase and is covalently attached to the 5'-end of the genomic RNA. This uridylylated form acts as a nucleotide-peptide primer for the polymerase. In terms of processing, the viral RNA1 of bymoviruses is expressed as a single polyprotein which undergoes post-translational proteolytic processing by the main proteinase NIa-pro resulting in the production of at least eight individual proteins.

The protein localises to the host cytoplasmic vesicle. The protein resides in the virion. The catalysed reaction is RNA(n) + a ribonucleoside 5'-triphosphate = RNA(n+1) + diphosphate. It carries out the reaction Hydrolyzes glutaminyl bonds, and activity is further restricted by preferences for the amino acids in P6 - P1' that vary with the species of potyvirus, e.g. Glu-Xaa-Xaa-Tyr-Xaa-Gln-|-(Ser or Gly) for the enzyme from tobacco etch virus. The natural substrate is the viral polyprotein, but other proteins and oligopeptides containing the appropriate consensus sequence are also cleaved.. Functionally, indispensable for virus replication. In terms of biological role, mediates the cap-independent, EIF4E-dependent translation of viral genomic RNAs. Binds to the cap-binding site of host EIF4E and thus interferes with the host EIF4E-dependent mRNA export and translation. VPg-RNA directly binds EIF4E and is a template for transcription. Also forms trimeric complexes with EIF4E-EIF4G, which are templates for translation. Its function is as follows. Has RNA-binding and proteolytic activities. An RNA-dependent RNA polymerase that plays an essential role in the virus replication. This Hordeum vulgare (Barley) protein is Genome polyprotein 1.